The primary structure comprises 293 residues: Methylsterol monooxygenase 1 (293 aa).

The next 2 helical transmembrane spans lie at 55–75 (LIVH…FQFI) and 100–120 (VLLF…YYFT). The Fatty acid hydroxylase domain maps to 145 to 274 (CAVIEDTWHY…FTWWDRIFGT (130 aa)). The short motif at 157-161 (HRLLH) is the Histidine box-1 element. A Histidine box-2 motif is present at residues 170 to 174 (HKVHH). Residues 199–219 (FFIGIVLLCDHVILLWAWVTI) form a helical membrane-spanning segment. The Histidine box-3 signature appears at 249–255 (HHDFHHM).

This sequence belongs to the sterol desaturase family. Requires Fe cation as cofactor. Ubiquitinated by MARCHF6, leading to proteasomal degradation.

It is found in the endoplasmic reticulum membrane. It carries out the reaction 4,4-dimethyl-5alpha-cholest-7-en-3beta-ol + 6 Fe(II)-[cytochrome b5] + 3 O2 + 5 H(+) = 4alpha-carboxy-4beta-methyl-5alpha-cholest-7-ene-3beta-ol + 6 Fe(III)-[cytochrome b5] + 4 H2O. The enzyme catalyses 4,4-dimethyl-5alpha-cholesta-8,24-dien-3beta-ol + 6 Fe(II)-[cytochrome b5] + 3 O2 + 5 H(+) = 4beta-methylzymosterol-4alpha-carboxylate + 6 Fe(III)-[cytochrome b5] + 4 H2O. It catalyses the reaction 4alpha-methylzymosterol + 6 Fe(II)-[cytochrome b5] + 3 O2 + 5 H(+) = 4alpha-carboxyzymosterol + 6 Fe(III)-[cytochrome b5] + 4 H2O. The catalysed reaction is 4alpha-methyl-5alpha-cholest-7-en-3beta-ol + 6 Fe(II)-[cytochrome b5] + 3 O2 + 5 H(+) = 4alpha-carboxy-5alpha-cholest-7-en-3beta-ol + 6 Fe(III)-[cytochrome b5] + 4 H2O. It carries out the reaction 4,4-dimethyl-5alpha-cholest-8-en-3beta-ol + 6 Fe(II)-[cytochrome b5] + 3 O2 + 5 H(+) = 4alpha-carboxy-4beta-methyl-5alpha-cholest-8-en-3beta-ol + 6 Fe(III)-[cytochrome b5] + 4 H2O. The enzyme catalyses 4alpha-methyl-5alpha-cholest-8-en-3beta-ol + 6 Fe(II)-[cytochrome b5] + 3 O2 + 5 H(+) = 4alpha-carboxy-5alpha-cholest-8-ene-3beta-ol + 6 Fe(III)-[cytochrome b5] + 4 H2O. Its pathway is steroid biosynthesis; zymosterol biosynthesis; zymosterol from lanosterol: step 3/6. The protein operates within steroid biosynthesis; cholesterol biosynthesis. Its function is as follows. Catalyzes the three-step monooxygenation required for the demethylation of 4,4-dimethyl and 4alpha-methylsterols, which can be subsequently metabolized to cholesterol. In Pongo abelii (Sumatran orangutan), this protein is Methylsterol monooxygenase 1 (MSMO1).